A 221-amino-acid chain; its full sequence is Zingipain-2 (221 aa).

2 disulfide bridges follow: Cys-24/Cys-65 and Cys-58/Cys-98. The active site involves Cys-27. Residues Asn-99 and Asn-156 are each glycosylated (N-linked (GlcNAc...) asparagine). An intrachain disulfide couples Cys-155 to Cys-206. The active site involves His-161.

It belongs to the peptidase C1 family.

It carries out the reaction Preferential cleavage of peptides with a proline residue at the P2 position.. In terms of biological role, cysteine proteinase with a specific activity toward peptides with a proline residue at the P2 position. This is Zingipain-2 from Zingiber officinale (Ginger).